A 294-amino-acid chain; its full sequence is 4-hydroxy-tetrahydrodipicolinate synthase (294 aa).

Thr-45 is a binding site for pyruvate. Tyr-133 acts as the Proton donor/acceptor in catalysis. Catalysis depends on Lys-161, which acts as the Schiff-base intermediate with substrate. Ile-203 serves as a coordination point for pyruvate.

It belongs to the DapA family. Homotetramer; dimer of dimers.

The protein localises to the cytoplasm. It catalyses the reaction L-aspartate 4-semialdehyde + pyruvate = (2S,4S)-4-hydroxy-2,3,4,5-tetrahydrodipicolinate + H2O + H(+). It functions in the pathway amino-acid biosynthesis; L-lysine biosynthesis via DAP pathway; (S)-tetrahydrodipicolinate from L-aspartate: step 3/4. Functionally, catalyzes the condensation of (S)-aspartate-beta-semialdehyde [(S)-ASA] and pyruvate to 4-hydroxy-tetrahydrodipicolinate (HTPA). The polypeptide is 4-hydroxy-tetrahydrodipicolinate synthase (Shewanella baltica (strain OS223)).